The chain runs to 247 residues: Geranylgeranylglyceryl phosphate synthase (247 aa).

Residues D23 and S52 each coordinate Mg(2+). Residues 171–177, 203–204, and 225–226 contribute to the sn-glycerol 1-phosphate site; these read YLEAGSG, GG, and GT.

The protein belongs to the GGGP/HepGP synthase family. Group II subfamily. Mg(2+) is required as a cofactor.

The protein resides in the cytoplasm. It carries out the reaction sn-glycerol 1-phosphate + (2E,6E,10E)-geranylgeranyl diphosphate = sn-3-O-(geranylgeranyl)glycerol 1-phosphate + diphosphate. It functions in the pathway membrane lipid metabolism; glycerophospholipid metabolism. Prenyltransferase that catalyzes the transfer of the geranylgeranyl moiety of geranylgeranyl diphosphate (GGPP) to the C3 hydroxyl of sn-glycerol-1-phosphate (G1P). This reaction is the first ether-bond-formation step in the biosynthesis of archaeal membrane lipids. In Methanosarcina barkeri (strain Fusaro / DSM 804), this protein is Geranylgeranylglyceryl phosphate synthase.